A 302-amino-acid chain; its full sequence is Snake venom metalloprotease inhibitor 02A10 (302 aa).

The N-terminal stretch at 1–23 (MSVSRLAASGLLLVSLLALALDG) is a signal peptide. Positions 24-47 (KPVEKWSPWLWPPRPRPPIPPLQQ) are excised as a propeptide. The segment at 32–302 (WLWPPRPRPP…CPKLPPSGGH (271 aa)) is disordered. Residues 33–44 (LWPPRPRPPIPP) show a composition bias toward pro residues. A Pyrrolidone carboxylic acid modification is found at Gln-48. Residues 51–58 (LDPPIPQQ) constitute a propeptide that is removed on maturation. Gln-59 carries the pyrrolidone carboxylic acid modification. The propeptide occupies 62–69 (LDPPIPQQ). The residue at position 70 (Gln-70) is a Pyrrolidone carboxylic acid. Residues 73-80 (LDPPIPQQ) constitute a propeptide that is removed on maturation. A Pyrrolidone carboxylic acid modification is found at Gln-81. Positions 84–91 (LNPPIPQQ) are excised as a propeptide. The residue at position 92 (Gln-92) is a Pyrrolidone carboxylic acid. Residues 95 to 102 (LDPPIPQQ) constitute a propeptide that is removed on maturation. The residue at position 103 (Gln-103) is a Pyrrolidone carboxylic acid. The propeptide occupies 106–113 (LNPPIPQQ). The residue at position 114 (Gln-114) is a Pyrrolidone carboxylic acid. The propeptide occupies 117–124 (LNPPIPQQ). At Gln-125 the chain carries Pyrrolidone carboxylic acid. A propeptide spanning residues 128 to 135 (LNPPIPQQ) is cleaved from the precursor. Residue Gln-136 is modified to Pyrrolidone carboxylic acid. The propeptide occupies 139–146 (LNPPIPQQ). The residue at position 147 (Gln-147) is a Pyrrolidone carboxylic acid. A propeptide spanning residues 150–157 (LDPPIPQQ) is cleaved from the precursor. Gln-158 is subject to Pyrrolidone carboxylic acid. A propeptide spanning residues 161–168 (LDPPIPQQ) is cleaved from the precursor. Gln-169 is modified (pyrrolidone carboxylic acid). A propeptide spanning residues 172-179 (LDPPIPQQ) is cleaved from the precursor. At Gln-180 the chain carries Pyrrolidone carboxylic acid. Residues 183 to 190 (LNPPIPQQ) constitute a propeptide that is removed on maturation. Pyrrolidone carboxylic acid is present on Gln-191. A propeptide spanning residues 194–201 (LDPPIPQQ) is cleaved from the precursor. A Pyrrolidone carboxylic acid modification is found at Gln-202. The propeptide occupies 205 to 212 (LDPPIPQQ). Gln-213 bears the Pyrrolidone carboxylic acid mark. Positions 216-223 (LNPPIPQQ) are excised as a propeptide. Position 224 is a pyrrolidone carboxylic acid (Gln-224). Positions 227-273 (QRPLQPEVPSLMELHQERQKQGRMMHHDEDPGDAAEGPRRQKKEPGK) are excised as a propeptide. Basic and acidic residues-rich tracts occupy residues 240–255 (LHQERQKQGRMMHHDE) and 262–273 (EGPRRQKKEPGK). Cysteines 279 and 293 form a disulfide. Residues 294–302 (PKLPPSGGH) constitute a propeptide that is removed on maturation.

In the C-terminal section; belongs to the natriuretic peptide family. In terms of tissue distribution, expressed by the venom gland.

Its subcellular location is the secreted. Its function is as follows. pEKW peptides may serve as metalloproteinase inhibitors during glandular storage. Their inhibition may be instantly disengaged, by dilution or physiochemical change, when venom is injected into tissue of the victim. In terms of biological role, exhibits hypotensive and vasodepressor activity. Acts by activating natriuretic receptors (NPR1 and/or NPR2 and/or NPR3). The protein is Snake venom metalloprotease inhibitor 02A10 (Svmpi-Cce12) of Cerastes cerastes (Horned desert viper).